Here is a 67-residue protein sequence, read N- to C-terminus: Cell division protein ZapB (67 aa).

Residues 3–59 are a coiled coil; sequence LELLSQLETKIQTALETIELLKLELDEEKEKAANLAEQNHQLKQELSSWNDKITGLV.

It belongs to the ZapB family. Homodimer. The ends of the coiled-coil dimer bind to each other, forming polymers. Interacts with FtsZ.

The protein resides in the cytoplasm. Functionally, non-essential, abundant cell division factor that is required for proper Z-ring formation. It is recruited early to the divisome by direct interaction with FtsZ, stimulating Z-ring assembly and thereby promoting cell division earlier in the cell cycle. Its recruitment to the Z-ring requires functional FtsA or ZipA. This is Cell division protein ZapB from Shewanella amazonensis (strain ATCC BAA-1098 / SB2B).